A 281-amino-acid chain; its full sequence is HTH-type transcriptional activator RhaR (281 aa).

Residues 178 to 276 (DKLLAALAAS…GMSPGQWRQR (99 aa)) enclose the HTH araC/xylS-type domain. 2 consecutive DNA-binding regions (H-T-H motif) follow at residues 195-216 (ERFC…RQQT) and 243-266 (IGDI…SREI).

As to quaternary structure, binds DNA as a dimer.

It is found in the cytoplasm. Activates expression of the rhaSR operon in response to L-rhamnose. The protein is HTH-type transcriptional activator RhaR of Klebsiella pneumoniae subsp. pneumoniae (strain ATCC 700721 / MGH 78578).